Here is a 144-residue protein sequence, read N- to C-terminus: Small ribosomal subunit protein bS16 (144 aa).

A disordered region spans residues 115–144 (NEPVAEAVTPKKKAKKDDAAAESTEAEAAE).

Belongs to the bacterial ribosomal protein bS16 family.

The protein is Small ribosomal subunit protein bS16 of Nocardia farcinica (strain IFM 10152).